Here is a 157-residue protein sequence, read N- to C-terminus: 2-C-methyl-D-erythritol 2,4-cyclodiphosphate synthase (157 aa).

Residues Asp-9 and His-11 each coordinate a divalent metal cation. 4-CDP-2-C-methyl-D-erythritol 2-phosphate-binding positions include 9 to 11 (DVH) and 35 to 36 (HS). Position 43 (His-43) interacts with a divalent metal cation. Residues 57 to 59 (DIG), 62 to 66 (FPETD), 133 to 136 (TTME), Phe-140, and Lys-143 contribute to the 4-CDP-2-C-methyl-D-erythritol 2-phosphate site.

The protein belongs to the IspF family. As to quaternary structure, homotrimer. A divalent metal cation is required as a cofactor.

It catalyses the reaction 4-CDP-2-C-methyl-D-erythritol 2-phosphate = 2-C-methyl-D-erythritol 2,4-cyclic diphosphate + CMP. It functions in the pathway isoprenoid biosynthesis; isopentenyl diphosphate biosynthesis via DXP pathway; isopentenyl diphosphate from 1-deoxy-D-xylulose 5-phosphate: step 4/6. Its function is as follows. Involved in the biosynthesis of isopentenyl diphosphate (IPP) and dimethylallyl diphosphate (DMAPP), two major building blocks of isoprenoid compounds. Catalyzes the conversion of 4-diphosphocytidyl-2-C-methyl-D-erythritol 2-phosphate (CDP-ME2P) to 2-C-methyl-D-erythritol 2,4-cyclodiphosphate (ME-CPP) with a corresponding release of cytidine 5-monophosphate (CMP). The chain is 2-C-methyl-D-erythritol 2,4-cyclodiphosphate synthase from Enterococcus faecalis (strain ATCC 700802 / V583).